Here is a 120-residue protein sequence, read N- to C-terminus: NAD(P)H-quinone oxidoreductase subunit 3, chloroplastic (120 aa).

Helical transmembrane passes span F10 to V30, I64 to M84, and V88 to S108.

It belongs to the complex I subunit 3 family. In terms of assembly, NDH is composed of at least 16 different subunits, 5 of which are encoded in the nucleus.

The protein localises to the plastid. It localises to the chloroplast thylakoid membrane. The enzyme catalyses a plastoquinone + NADH + (n+1) H(+)(in) = a plastoquinol + NAD(+) + n H(+)(out). It carries out the reaction a plastoquinone + NADPH + (n+1) H(+)(in) = a plastoquinol + NADP(+) + n H(+)(out). Its function is as follows. NDH shuttles electrons from NAD(P)H:plastoquinone, via FMN and iron-sulfur (Fe-S) centers, to quinones in the photosynthetic chain and possibly in a chloroplast respiratory chain. The immediate electron acceptor for the enzyme in this species is believed to be plastoquinone. Couples the redox reaction to proton translocation, and thus conserves the redox energy in a proton gradient. This is NAD(P)H-quinone oxidoreductase subunit 3, chloroplastic from Pelargonium hortorum (Common geranium).